We begin with the raw amino-acid sequence, 610 residues long: UvrABC system protein C (610 aa).

Positions 16 to 94 (SQPGVYRMYD…IKLYQPRYNV (79 aa)) constitute a GIY-YIG domain. Residues 204 to 239 (DQVLTQLISRMETASQNLEFEEAARIRDQIQAVRRV) form the UVR domain.

This sequence belongs to the UvrC family. As to quaternary structure, interacts with UvrB in an incision complex.

Its subcellular location is the cytoplasm. In terms of biological role, the UvrABC repair system catalyzes the recognition and processing of DNA lesions. UvrC both incises the 5' and 3' sides of the lesion. The N-terminal half is responsible for the 3' incision and the C-terminal half is responsible for the 5' incision. In Escherichia coli O139:H28 (strain E24377A / ETEC), this protein is UvrABC system protein C.